We begin with the raw amino-acid sequence, 321 residues long: GTP 3',8-cyclase (321 aa).

Positions 5-233 (SFNRVIDYIR…QGSSKIYTLE (229 aa)) constitute a Radical SAM core domain. Residue Arg14 participates in GTP binding. Cys21 and Cys25 together coordinate [4Fe-4S] cluster. Tyr27 provides a ligand contact to S-adenosyl-L-methionine. Cys28 contacts [4Fe-4S] cluster. A GTP-binding site is contributed by Arg64. S-adenosyl-L-methionine is bound at residue Gly68. Ser95 contacts GTP. Ser119 provides a ligand contact to S-adenosyl-L-methionine. Residue Lys155 coordinates GTP. Met189 is an S-adenosyl-L-methionine binding site. Positions 249 and 252 each coordinate [4Fe-4S] cluster. 254–256 (RIR) serves as a coordination point for GTP. Cys266 contributes to the [4Fe-4S] cluster binding site.

This sequence belongs to the radical SAM superfamily. MoaA family. In terms of assembly, monomer and homodimer. [4Fe-4S] cluster serves as cofactor.

The enzyme catalyses GTP + AH2 + S-adenosyl-L-methionine = (8S)-3',8-cyclo-7,8-dihydroguanosine 5'-triphosphate + 5'-deoxyadenosine + L-methionine + A + H(+). It functions in the pathway cofactor biosynthesis; molybdopterin biosynthesis. Functionally, catalyzes the cyclization of GTP to (8S)-3',8-cyclo-7,8-dihydroguanosine 5'-triphosphate. In Helicobacter pylori (strain HPAG1), this protein is GTP 3',8-cyclase.